Here is a 364-residue protein sequence, read N- to C-terminus: Dihydroorotate dehydrogenase (quinone) (364 aa).

Residues 61–65 and T85 each bind FMN; that span reads AGFDK. Substrate is bound at residue K65. 110–114 is a binding site for substrate; it reads NRMGF. 2 residues coordinate FMN: N139 and N170. Residue N170 coordinates substrate. S173 acts as the Nucleophile in catalysis. N175 serves as a coordination point for substrate. 2 residues coordinate FMN: K214 and A242. 243–244 contributes to the substrate binding site; that stretch reads NT. FMN contacts are provided by residues G266, G295, and 316 to 317; that span reads YS.

The protein belongs to the dihydroorotate dehydrogenase family. Type 2 subfamily. Monomer. FMN is required as a cofactor.

The protein localises to the cell membrane. The enzyme catalyses (S)-dihydroorotate + a quinone = orotate + a quinol. It functions in the pathway pyrimidine metabolism; UMP biosynthesis via de novo pathway; orotate from (S)-dihydroorotate (quinone route): step 1/1. Functionally, catalyzes the conversion of dihydroorotate to orotate with quinone as electron acceptor. This chain is Dihydroorotate dehydrogenase (quinone), found in Rhodopseudomonas palustris (strain TIE-1).